Here is a 236-residue protein sequence, read N- to C-terminus: tRNA (guanine-N(7)-)-methyltransferase (236 aa).

S-adenosyl-L-methionine-binding residues include D35, E60, N87, and D113. The active site involves D113. Substrate contacts are provided by K117 and D149. A disordered region spans residues 217–236 (EFEQHWQEIDNPGNAPTPDA).

The protein belongs to the class I-like SAM-binding methyltransferase superfamily. TrmB family.

It catalyses the reaction guanosine(46) in tRNA + S-adenosyl-L-methionine = N(7)-methylguanosine(46) in tRNA + S-adenosyl-L-homocysteine. It functions in the pathway tRNA modification; N(7)-methylguanine-tRNA biosynthesis. In terms of biological role, catalyzes the formation of N(7)-methylguanine at position 46 (m7G46) in tRNA. The polypeptide is tRNA (guanine-N(7)-)-methyltransferase (Synechococcus sp. (strain CC9902)).